The chain runs to 90 residues: Small ribosomal subunit protein uS17 (90 aa).

Belongs to the universal ribosomal protein uS17 family. Part of the 30S ribosomal subunit.

Its function is as follows. One of the primary rRNA binding proteins, it binds specifically to the 5'-end of 16S ribosomal RNA. The chain is Small ribosomal subunit protein uS17 from Treponema denticola (strain ATCC 35405 / DSM 14222 / CIP 103919 / JCM 8153 / KCTC 15104).